The primary structure comprises 253 residues: MNILVTNDDGIMAPGINILAQKLAEKHSVLVVAPDVERSATGHAITIRTPLWAKEVKVGEKTVGYAINGTPADCVKLGILAIADFEIELVVSGINKGPNLGTDILYSGTVSGALEGAVMEKPSIAISAADWNNPKYETAAEFLLEFLDTYDVTKMPEFTALNINVPSVDRAELKGWKVTRQSRRRYRDYFEKRKDPYGNNYYWMFGEIIEDDPGEDSDYAAVRRNYVSITPIYAFMTNQNYMPKLKEELEGGN.

A divalent metal cation-binding residues include Asp-8, Asp-9, Ser-39, and Asn-95.

The protein belongs to the SurE nucleotidase family. The cofactor is a divalent metal cation.

The protein localises to the cytoplasm. It catalyses the reaction a ribonucleoside 5'-phosphate + H2O = a ribonucleoside + phosphate. Its function is as follows. Nucleotidase that shows phosphatase activity on nucleoside 5'-monophosphates. The protein is 5'-nucleotidase SurE of Kosmotoga olearia (strain ATCC BAA-1733 / DSM 21960 / TBF 19.5.1).